Here is a 133-residue protein sequence, read N- to C-terminus: Small ribosomal subunit protein eS24 (133 aa).

N-acetylmethionine is present on Met-1. Thr-9 carries the post-translational modification Phosphothreonine. A Glycyl lysine isopeptide (Lys-Gly) (interchain with G-Cter in SUMO2) cross-link involves residue Lys-37. Residues 92–133 form a disordered region; sequence ARHGLYEKKKTSRKQRKERKNRMKKVRGTAKANVGAGKKPKE. The segment covering 101 to 119 has biased composition (basic residues); that stretch reads KTSRKQRKERKNRMKKVRG.

This sequence belongs to the eukaryotic ribosomal protein eS24 family. Component of the small ribosomal subunit. Part of the small subunit (SSU) processome, composed of more than 70 proteins and the RNA chaperone small nucleolar RNA (snoRNA) U3.

Its subcellular location is the cytoplasm. It is found in the nucleus. The protein resides in the nucleolus. In terms of biological role, component of the small ribosomal subunit. The ribosome is a large ribonucleoprotein complex responsible for the synthesis of proteins in the cell. Required for processing of pre-rRNA and maturation of 40S ribosomal subunits. Part of the small subunit (SSU) processome, first precursor of the small eukaryotic ribosomal subunit. During the assembly of the SSU processome in the nucleolus, many ribosome biogenesis factors, an RNA chaperone and ribosomal proteins associate with the nascent pre-rRNA and work in concert to generate RNA folding, modifications, rearrangements and cleavage as well as targeted degradation of pre-ribosomal RNA by the RNA exosome. This is Small ribosomal subunit protein eS24 (RPS24) from Oryctolagus cuniculus (Rabbit).